Reading from the N-terminus, the 190-residue chain is Segregation and condensation protein B (190 aa).

Belongs to the ScpB family. Homodimer. Homodimerization may be required to stabilize the binding of ScpA to the Smc head domains. Component of a cohesin-like complex composed of ScpA, ScpB and the Smc homodimer, in which ScpA and ScpB bind to the head domain of Smc. The presence of the three proteins is required for the association of the complex with DNA.

It localises to the cytoplasm. Functionally, participates in chromosomal partition during cell division. May act via the formation of a condensin-like complex containing Smc and ScpA that pull DNA away from mid-cell into both cell halves. The protein is Segregation and condensation protein B of Bacillus cereus (strain ATCC 10987 / NRS 248).